A 344-amino-acid chain; its full sequence is DNA-directed RNA polymerase subunit alpha (344 aa).

An alpha N-terminal domain (alpha-NTD) region spans residues 1-238 (MKVIKTAPLI…KQLGVFGERP (238 aa)). The segment at 253 to 344 (DAKDLSAKIE…EKLEDKGGND (92 aa)) is alpha C-terminal domain (alpha-CTD).

Belongs to the RNA polymerase alpha chain family. Homodimer. The RNAP catalytic core consists of 2 alpha, 1 beta, 1 beta' and 1 omega subunit. When a sigma factor is associated with the core the holoenzyme is formed, which can initiate transcription.

The catalysed reaction is RNA(n) + a ribonucleoside 5'-triphosphate = RNA(n+1) + diphosphate. In terms of biological role, DNA-dependent RNA polymerase catalyzes the transcription of DNA into RNA using the four ribonucleoside triphosphates as substrates. In Helicobacter pylori (strain HPAG1), this protein is DNA-directed RNA polymerase subunit alpha.